The sequence spans 276 residues: Lyso-ornithine lipid O-acyltransferase (276 aa).

The helical transmembrane segment at 25-47 (LALRGGAMALVLMAGLTLHLAVR) threads the bilayer.

It belongs to the 1-acyl-sn-glycerol-3-phosphate acyltransferase family. OlsA subfamily.

It localises to the membrane. The enzyme catalyses a lyso-ornithine lipid + a fatty acyl-[ACP] = an N(2)-[(3R)-3-(acyloxy)acyl]-L-ornithine lipid + holo-[ACP]. It catalyses the reaction a fatty acyl-[ACP] + a 1-acyl-sn-glycero-3-phosphate = a 1,2-diacyl-sn-glycero-3-phosphate + holo-[ACP]. It functions in the pathway lipid metabolism. The protein operates within phospholipid metabolism. Functionally, catalyzes the second step in the formation of ornithine lipids, which are phosphorus-free membrane lipids. Uses acyl-acyl carrier protein (acyl-AcpP) as an acyl donor and converts lyso-ornithine lipid (LOL) into ornithine lipid (OL). It can also act as an alternate acyl-sn-glycerol-3-phosphate acyltransferase (AGPAT) to ensure glycerophospholipid production. This is Lyso-ornithine lipid O-acyltransferase from Rhodobacter capsulatus (strain ATCC BAA-309 / NBRC 16581 / SB1003).